The following is a 106-amino-acid chain: PYVVTENCIKCKYQDCVEVCPVDCFYEGENFLVINPDECIDCGVCNPECPAEAIAGKWLEINRKFADLWPNITRKGPALADADDWKDKPDKTGLLSENPGKGTVCH.

4Fe-4S ferredoxin-type domains lie at 2 to 29 (YVVT…YEGE) and 30 to 59 (NFLV…GKWL). 2 residues coordinate [3Fe-4S] cluster: Cys-8 and Cys-16. [4Fe-4S] cluster is bound by residues Cys-20, Cys-39, Cys-42, and Cys-45. Cys-49 serves as a coordination point for [3Fe-4S] cluster. The tract at residues 80–106 (ADADDWKDKPDKTGLLSENPGKGTVCH) is disordered.

The cofactor is [4Fe-4S] cluster. [3Fe-4S] cluster is required as a cofactor.

In terms of biological role, ferredoxins are iron-sulfur proteins that transfer electrons in a wide variety of metabolic reactions. This Rhodospirillum rubrum protein is Ferredoxin-2.